The chain runs to 324 residues: Olfactory receptor 4K15 (324 aa).

Over 1–25 the chain is Extracellular; the sequence is MNETNHSRVTEFVLLGLSSSRELQP. 2 N-linked (GlcNAc...) asparagine glycosylation sites follow: asparagine 2 and asparagine 5. The chain crosses the membrane as a helical span at residues 26–49; that stretch reads FLFLTFSLLYLAILLGNFLIILTV. The Cytoplasmic portion of the chain corresponds to 50-57; it reads TSDSRLHT. Residues 58-79 traverse the membrane as a helical segment; it reads PMYFLLANLSFIDVCVASFATP. Over 80 to 100 the chain is Extracellular; that stretch reads KMIADFLVERKTISFDACLAQ. Cysteine 97 and cysteine 189 are oxidised to a cystine. The helical transmembrane segment at 101-120 threads the bilayer; it reads IFFVHLFTGSEMVLLVSMAY. Over 121–139 the chain is Cytoplasmic; that stretch reads DRYVAICKPLHYMTVMSRR. A helical membrane pass occupies residues 140–158; that stretch reads VCVVLVLISWFVGFIHTTS. The Extracellular segment spans residues 159 to 195; the sequence is QLAFTVNLPFCGPNKVDSFFCDLPLVTKLACIDTYVV. A helical transmembrane segment spans residues 196-219; it reads SLLIVADSGFLSLSSFLLLVVSYT. Residues 220–235 lie on the Cytoplasmic side of the membrane; the sequence is VILVTVRNRSSASMAK. A helical transmembrane segment spans residues 236-258; the sequence is ARSTLTAHITVVTLFFGPCIFIY. Residues 259 to 269 are Extracellular-facing; sequence VWPFSSYSVDK. Residues 270–289 traverse the membrane as a helical segment; that stretch reads VLAVFYTIFTLILNPVIYTL. At 290 to 324 the chain is on the cytoplasmic side; sequence RNKEVKAAMSKLKSRYLKPSQVSVVIRNVLFLETK.

This sequence belongs to the G-protein coupled receptor 1 family.

Its subcellular location is the cell membrane. Odorant receptor. This is Olfactory receptor 4K15 (OR4K15) from Homo sapiens (Human).